We begin with the raw amino-acid sequence, 198 residues long: Recombination protein RecR (198 aa).

A C4-type zinc finger spans residues 57-72 (CSICGNITEEDPCEIC). Residues 80-175 (SIILVVEEPK…TVTRLAHGLS (96 aa)) form the Toprim domain.

This sequence belongs to the RecR family.

Its function is as follows. May play a role in DNA repair. It seems to be involved in an RecBC-independent recombinational process of DNA repair. It may act with RecF and RecO. The polypeptide is Recombination protein RecR (Enterococcus faecalis (strain ATCC 700802 / V583)).